Here is a 212-residue protein sequence, read N- to C-terminus: Proteasome subunit beta 2 (212 aa).

Residues 1–15 constitute a propeptide, removed in mature form; by autocatalysis; the sequence is MLHHPGTGQLRALKG. T16 (nucleophile) is an active-site residue.

This sequence belongs to the peptidase T1B family. In terms of assembly, the 20S proteasome core is composed of 14 alpha and 14 beta subunits that assemble into four stacked heptameric rings, resulting in a barrel-shaped structure. The two inner rings, each composed of seven catalytic beta subunits, are sandwiched by two outer rings, each composed of seven alpha subunits. The catalytic chamber with the active sites is on the inside of the barrel. Has a gated structure, the ends of the cylinder being occluded by the N-termini of the alpha-subunits. Is capped at one or both ends by the proteasome regulatory ATPase, PAN.

The protein localises to the cytoplasm. It carries out the reaction Cleavage of peptide bonds with very broad specificity.. Its activity is regulated as follows. The formation of the proteasomal ATPase PAN-20S proteasome complex, via the docking of the C-termini of PAN into the intersubunit pockets in the alpha-rings, triggers opening of the gate for substrate entry. Interconversion between the open-gate and close-gate conformations leads to a dynamic regulation of the 20S proteasome proteolysis activity. In terms of biological role, component of the proteasome core, a large protease complex with broad specificity involved in protein degradation. The chain is Proteasome subunit beta 2 from Hyperthermus butylicus (strain DSM 5456 / JCM 9403 / PLM1-5).